The primary structure comprises 393 residues: Phosphoglycerate kinase (393 aa).

Substrate is bound by residues 21 to 23, arginine 37, 60 to 63, arginine 119, and arginine 152; these read DFN and HLGR. ATP is bound by residues lysine 202, glycine 291, glutamate 322, and 348–351; that span reads GGDT.

Belongs to the phosphoglycerate kinase family. In terms of assembly, monomer.

Its subcellular location is the cytoplasm. It catalyses the reaction (2R)-3-phosphoglycerate + ATP = (2R)-3-phospho-glyceroyl phosphate + ADP. The protein operates within carbohydrate degradation; glycolysis; pyruvate from D-glyceraldehyde 3-phosphate: step 2/5. The sequence is that of Phosphoglycerate kinase from Coprothermobacter proteolyticus (strain ATCC 35245 / DSM 5265 / OCM 4 / BT).